Here is a 207-residue protein sequence, read N- to C-terminus: Small ribosomal subunit protein uS4c (207 aa).

The S4 RNA-binding domain occupies 92–156 (MRLDNILFRL…YQSIITKRIE (65 aa)).

This sequence belongs to the universal ribosomal protein uS4 family. In terms of assembly, part of the 30S ribosomal subunit. Contacts protein S5. The interaction surface between S4 and S5 is involved in control of translational fidelity.

The protein resides in the plastid. It is found in the chloroplast. Functionally, one of the primary rRNA binding proteins, it binds directly to 16S rRNA where it nucleates assembly of the body of the 30S subunit. In terms of biological role, with S5 and S12 plays an important role in translational accuracy. The sequence is that of Small ribosomal subunit protein uS4c (rps4) from Equisetum pratense (Meadow horsetail).